A 631-amino-acid polypeptide reads, in one-letter code: Dolichyl-diphosphooligosaccharide--protein glycosyltransferase subunit 2 (631 aa).

The N-terminal stretch at 1-22 (MAPPGSSAVFLLALTITASVQA) is a signal peptide. The Lumenal segment spans residues 23–540 (LTPTHYLTKQ…REPEKRPPTV (518 aa)). Asn106 carries an N-linked (GlcNAc...) asparagine glycan. Lys154 is covalently cross-linked (Glycyl lysine isopeptide (Lys-Gly) (interchain with G-Cter in ubiquitin)). A helical transmembrane segment spans residues 541–561 (VSNTFTALILSPLLLLFALWI). The Cytoplasmic portion of the chain corresponds to 562–571 (RIGANVSNFT). A helical transmembrane segment spans residues 572 to 592 (FAPSTVIFHLGHAAMLGLMYI). The Lumenal portion of the chain corresponds to 593–596 (YWTQ). The chain crosses the membrane as a helical span at residues 597–617 (LNMFQTLKYLAVLGTVTFLAG). Residues 618–631 (NRMLAQHAVKRTAH) are Cytoplasmic-facing.

The protein belongs to the SWP1 family. Component of the oligosaccharyltransferase (OST) complex. OST exists in two different complex forms which contain common core subunits RPN1, RPN2, OST48, OST4, DAD1 and TMEM258, either STT3A or STT3B as catalytic subunits, and form-specific accessory subunits. STT3A complex assembly occurs through the formation of 3 subcomplexes. Subcomplex 1 contains RPN1 and TMEM258, subcomplex 2 contains the STT3A-specific subunits STT3A, DC2/OSTC, and KCP2 as well as the core subunit OST4, and subcomplex 3 contains RPN2, DAD1, and OST48. The STT3A complex can form stable complexes with the Sec61 complex or with both the Sec61 and TRAP complexes. Interacts with DDI2. Interacts with TMEM35A/NACHO.

It localises to the endoplasmic reticulum. It is found in the endoplasmic reticulum membrane. The protein operates within protein modification; protein glycosylation. Subunit of the oligosaccharyl transferase (OST) complex that catalyzes the initial transfer of a defined glycan (Glc(3)Man(9)GlcNAc(2) in eukaryotes) from the lipid carrier dolichol-pyrophosphate to an asparagine residue within an Asn-X-Ser/Thr consensus motif in nascent polypeptide chains, the first step in protein N-glycosylation. N-glycosylation occurs cotranslationally and the complex associates with the Sec61 complex at the channel-forming translocon complex that mediates protein translocation across the endoplasmic reticulum (ER). All subunits are required for a maximal enzyme activity. The protein is Dolichyl-diphosphooligosaccharide--protein glycosyltransferase subunit 2 of Mus musculus (Mouse).